The chain runs to 590 residues: Probable indole-3-acetic acid-amido synthetase GH3.1 (590 aa).

This sequence belongs to the IAA-amido conjugating enzyme family.

In terms of biological role, catalyzes the synthesis of indole-3-acetic acid (IAA)-amino acid conjugates, providing a mechanism for the plant to cope with the presence of excess auxin. In Arabidopsis thaliana (Mouse-ear cress), this protein is Probable indole-3-acetic acid-amido synthetase GH3.1 (GH3.1).